A 61-amino-acid chain; its full sequence is Small ribosomal subunit protein bS21 (61 aa).

The segment at 36–61 (EHYESPSVKRKKKAEAARKRKYKYGR) is disordered. The span at 43 to 61 (VKRKKKAEAARKRKYKYGR) shows a compositional bias: basic residues.

The protein belongs to the bacterial ribosomal protein bS21 family.

This Caldanaerobacter subterraneus subsp. tengcongensis (strain DSM 15242 / JCM 11007 / NBRC 100824 / MB4) (Thermoanaerobacter tengcongensis) protein is Small ribosomal subunit protein bS21 (rpsU).